We begin with the raw amino-acid sequence, 500 residues long: MLRKLLLLLMSCIIFLTRRSKAAAAASASKTLVWGPGLETNAVLPARFFFIQTVDTTGTNFTTSPGENTFEVKITSPTEPYARIWIQILDRNDGSFLVRYRMYASYTDLHVEVLLKDKLVGKSPYVLRGAVYHESCDCPEPDGALWEKNMHCPASFSQIESDLSIFQSVDPDRNAHEIIQRFGKSHSLCHYTIKNNQVYIKTHGEHVGFRIFMDAFLLSLTRKVKLPDIEFFVNLGDWPLEKRRASQNPSPVFSWCGSNDTRDIVMPTYDLTESVLETMGRVSLDMMSVQGHTGPVWEKKINKGFWRGRDSRKERLELVKLARANTAMLDAALTNFFFFKHDESLYGPLVKHVSFFDFFKYKYQINVDGTVAAYRLPYLLAGDSVVFKHDSIYYEHFYNELQPWVHYIPFRSDLSDLLEKIQWAKDHDEEAKKIALAGQQFARTHLMGDSVFCYYHKLFQKYAELQVTKPKVRDGMELVEQPKDDLFPCYCARKKVRDEL.

The first 22 residues, 1–22, serve as a signal peptide directing secretion; the sequence is MLRKLLLLLMSCIIFLTRRSKA. The Filamin repeat unit spans residues 23–128; the sequence is AAAASASKTL…LVGKSPYVLR (106 aa). N60 and N259 each carry an N-linked (GlcNAc...) asparagine glycan. The Prevents secretion from ER signature appears at 497-500; that stretch reads RDEL.

It belongs to the KDELC family.

Its subcellular location is the endoplasmic reticulum lumen. It carries out the reaction L-seryl-[EGF-like domain protein] + UDP-alpha-D-glucose = 3-O-(beta-D-glucosyl)-L-seryl-[EGF-like domain protein] + UDP + H(+). The enzyme catalyses L-seryl-[EGF-like domain protein] + UDP-alpha-D-xylose = 3-O-(beta-D-xylosyl)-L-seryl-[EGF-like domain protein] + UDP + H(+). Its pathway is protein modification; protein glycosylation. In terms of biological role, protein glucosyltransferase that catalyzes the transfer of glucose from UDP-glucose to a serine residue within the consensus sequence peptide C-X-N-T-X-G-S-F-X-C. Can also catalyze the transfer of xylose from UDP-xylose but less efficiently. The chain is Protein O-glucosyltransferase 2 (poglut2) from Danio rerio (Zebrafish).